We begin with the raw amino-acid sequence, 297 residues long: IMPACT family member C14C8.09c (297 aa).

Residues 225 to 255 (LRSELQEKNQKDKKKEVNKLEEKMTNAKEPN) adopt a coiled-coil conformation. 2 stretches are compositionally biased toward basic and acidic residues: residues 228–250 (ELQE…KMTN) and 280–297 (SVDH…EKEE). Residues 228 to 297 (ELQEKNQKDK…KIIKDVEKEE (70 aa)) form a disordered region.

The protein belongs to the IMPACT family.

This chain is IMPACT family member C14C8.09c, found in Schizosaccharomyces pombe (strain 972 / ATCC 24843) (Fission yeast).